We begin with the raw amino-acid sequence, 207 residues long: ATP phosphoribosyltransferase (207 aa).

The protein belongs to the ATP phosphoribosyltransferase family. Short subfamily. Heteromultimer composed of HisG and HisZ subunits.

The protein localises to the cytoplasm. The enzyme catalyses 1-(5-phospho-beta-D-ribosyl)-ATP + diphosphate = 5-phospho-alpha-D-ribose 1-diphosphate + ATP. Its pathway is amino-acid biosynthesis; L-histidine biosynthesis; L-histidine from 5-phospho-alpha-D-ribose 1-diphosphate: step 1/9. Functionally, catalyzes the condensation of ATP and 5-phosphoribose 1-diphosphate to form N'-(5'-phosphoribosyl)-ATP (PR-ATP). Has a crucial role in the pathway because the rate of histidine biosynthesis seems to be controlled primarily by regulation of HisG enzymatic activity. In Dictyoglomus thermophilum (strain ATCC 35947 / DSM 3960 / H-6-12), this protein is ATP phosphoribosyltransferase.